The sequence spans 132 residues: Small ribosomal subunit protein uS8 (132 aa).

Belongs to the universal ribosomal protein uS8 family. Part of the 30S ribosomal subunit. Contacts proteins S5 and S12.

One of the primary rRNA binding proteins, it binds directly to 16S rRNA central domain where it helps coordinate assembly of the platform of the 30S subunit. This is Small ribosomal subunit protein uS8 from Baumannia cicadellinicola subsp. Homalodisca coagulata.